A 239-amino-acid chain; its full sequence is uncharacterized protein (239 aa).

This is an uncharacterized protein from Edwardsiella ictaluri (strain 93-146).